The following is a 411-amino-acid chain: G1/S-specific cyclin pas1 (411 aa).

2 disordered regions span residues 210-253 (LKNQ…PSVL) and 307-326 (SLSKPVSLPPTPSSPKVGVY). A compositionally biased stretch (low complexity) spans 218–252 (PSSSPQTTQDSSPILTMAPSTPVSVGSTPPSTPSV).

It belongs to the cyclin family.

Its function is as follows. Essential for the control of the cell cycle at the G1/S (start) transition. Interacts with the pef1 protein kinase. The pef1/pas1 complex activates the res2/cdc10 complex. This Schizosaccharomyces pombe (strain 972 / ATCC 24843) (Fission yeast) protein is G1/S-specific cyclin pas1 (pas1).